Consider the following 767-residue polypeptide: Cilia- and flagella-associated protein 91 (767 aa).

The tract at residues 1-29 is disordered; it reads MSHAVTIEEPQAQPQVSQTRYRERSRAGS.

It belongs to the CFAP91 family. Interacts with MYCBP and AKAP1. Part of a complex containing MYCBP, AKAP1 and PRKAR2B. Interacts with CFAP61. In terms of assembly, does not interact with MYCBP. Phosphorylated by PKA. Strongly expressed in the liver. In terms of tissue distribution, widely expressed, but strongly expressed in all spermatogenesis-related tissues, including the testis, the epithelium of cauda and the corpus epididymis, as well as the spermatid and mature sperm. Also expressed in Leydig cells.

The protein resides in the mitochondrion. It localises to the cytoplasm. Its subcellular location is the cytoskeleton. The protein localises to the cilium axoneme. In terms of biological role, involved in sperm flagellum axonemal organization and function. May regulate cilium motility through its role in the assembly of the axonemal radial spokes. In Homo sapiens (Human), this protein is Cilia- and flagella-associated protein 91.